Reading from the N-terminus, the 103-residue chain is NADH-quinone oxidoreductase subunit K (103 aa).

Helical transmembrane passes span 5–25 (VPTSYYLALSGVLFALGLIGV), 32–52 (ILIFLSVELMLNAANIALVAF), and 66–86 (FIVMTLAAAEVAIGLAIIVAI).

It belongs to the complex I subunit 4L family. As to quaternary structure, NDH-1 is composed of 15 different subunits. Subunits NuoA, H, J, K, L, M, N constitute the membrane sector of the complex.

Its subcellular location is the cell membrane. The catalysed reaction is a quinone + NADH + 5 H(+)(in) = a quinol + NAD(+) + 4 H(+)(out). Functionally, NDH-1 shuttles electrons from NADH, via FMN and iron-sulfur (Fe-S) centers, to quinones in the respiratory chain. The immediate electron acceptor for the enzyme in this species is believed to be a menaquinone. Couples the redox reaction to proton translocation (for every two electrons transferred, four hydrogen ions are translocated across the cytoplasmic membrane), and thus conserves the redox energy in a proton gradient. This is NADH-quinone oxidoreductase subunit K from Deinococcus radiodurans (strain ATCC 13939 / DSM 20539 / JCM 16871 / CCUG 27074 / LMG 4051 / NBRC 15346 / NCIMB 9279 / VKM B-1422 / R1).